Here is a 231-residue protein sequence, read N- to C-terminus: Ribose-5-phosphate isomerase A (231 aa).

Substrate is bound by residues 31 to 34, 86 to 89, and 100 to 103; these read TGST, DGAD, and KGLG. E109 (proton acceptor) is an active-site residue. K127 contributes to the substrate binding site.

It belongs to the ribose 5-phosphate isomerase family. Homodimer.

The enzyme catalyses aldehydo-D-ribose 5-phosphate = D-ribulose 5-phosphate. Its pathway is carbohydrate degradation; pentose phosphate pathway; D-ribose 5-phosphate from D-ribulose 5-phosphate (non-oxidative stage): step 1/1. In terms of biological role, catalyzes the reversible conversion of ribose-5-phosphate to ribulose 5-phosphate. This Gluconobacter oxydans (strain 621H) (Gluconobacter suboxydans) protein is Ribose-5-phosphate isomerase A.